An 88-amino-acid polypeptide reads, in one-letter code: Small ribosomal subunit protein uS19 (88 aa).

The protein belongs to the universal ribosomal protein uS19 family.

Protein S19 forms a complex with S13 that binds strongly to the 16S ribosomal RNA. The chain is Small ribosomal subunit protein uS19 from Mycoplasma mycoides subsp. mycoides SC (strain CCUG 32753 / NCTC 10114 / PG1).